A 222-amino-acid chain; its full sequence is Uridine diphosphate glucose pyrophosphatase NUDT14 (222 aa).

The region spanning 38–206 is the Nudix hydrolase domain; the sequence is KTHDSVTILM…DVPKTLGVIF (169 aa). A Nudix box motif is present at residues 111–129; sequence PGLSLEEVACKEAWEECGY.

Belongs to the Nudix hydrolase family. Homodimer. It depends on Mg(2+) as a cofactor.

The protein resides in the cytoplasm. It carries out the reaction UDP-sugar + H2O = UMP + alpha-D-aldose 1-phosphate.. Functionally, hydrolyzes UDP-glucose to glucose 1-phosphate and UMP and ADP-ribose to ribose 5-phosphate and AMP. The physiological substrate is probably UDP-glucose. Poor activity on other substrates such as ADP-glucose, CDP-glucose, GDP-glucose and GDP-mannose. This is Uridine diphosphate glucose pyrophosphatase NUDT14 (NUDT14) from Bos taurus (Bovine).